Here is a 256-residue protein sequence, read N- to C-terminus: Imidazole glycerol phosphate synthase subunit HisF (256 aa).

Residues Asp11 and Asp130 contribute to the active site.

It belongs to the HisA/HisF family. Heterodimer of HisH and HisF.

The protein localises to the cytoplasm. The catalysed reaction is 5-[(5-phospho-1-deoxy-D-ribulos-1-ylimino)methylamino]-1-(5-phospho-beta-D-ribosyl)imidazole-4-carboxamide + L-glutamine = D-erythro-1-(imidazol-4-yl)glycerol 3-phosphate + 5-amino-1-(5-phospho-beta-D-ribosyl)imidazole-4-carboxamide + L-glutamate + H(+). It participates in amino-acid biosynthesis; L-histidine biosynthesis; L-histidine from 5-phospho-alpha-D-ribose 1-diphosphate: step 5/9. IGPS catalyzes the conversion of PRFAR and glutamine to IGP, AICAR and glutamate. The HisF subunit catalyzes the cyclization activity that produces IGP and AICAR from PRFAR using the ammonia provided by the HisH subunit. The polypeptide is Imidazole glycerol phosphate synthase subunit HisF (Psychrobacter sp. (strain PRwf-1)).